A 321-amino-acid polypeptide reads, in one-letter code: Cytochrome c biogenesis protein CcsA (321 aa).

The next 8 membrane-spanning stretches (helical) occupy residues 17 to 37 (VVSI…IIGL), 46 to 63 (MTTF…WIYL), 71 to 91 (LYES…VPYF), 98 to 118 (LKAI…SGLL), 143 to 163 (MVLG…LLVI), 225 to 245 (IISL…VWAN), 259 to 273 (TWAF…IYLH), and 286 to 306 (AIVA…VNLL).

It belongs to the CcmF/CycK/Ccl1/NrfE/CcsA family. May interact with Ccs1.

Its subcellular location is the plastid. The protein resides in the chloroplast thylakoid membrane. Its function is as follows. Required during biogenesis of c-type cytochromes (cytochrome c6 and cytochrome f) at the step of heme attachment. In Morus indica (Mulberry), this protein is Cytochrome c biogenesis protein CcsA.